The primary structure comprises 344 residues: Anthranilate phosphoribosyltransferase (344 aa).

Residues Gly84, 87-88 (GD), Thr92, 94-97 (NIST), 112-120 (KHGNRSVSS), and Ser124 contribute to the 5-phospho-alpha-D-ribose 1-diphosphate site. Gly84 provides a ligand contact to anthranilate. Residue Ser96 coordinates Mg(2+). Position 115 (Asn115) interacts with anthranilate. Arg170 lines the anthranilate pocket. 2 residues coordinate Mg(2+): Asp229 and Glu230.

The protein belongs to the anthranilate phosphoribosyltransferase family. As to quaternary structure, homodimer. Requires Mg(2+) as cofactor.

The enzyme catalyses N-(5-phospho-beta-D-ribosyl)anthranilate + diphosphate = 5-phospho-alpha-D-ribose 1-diphosphate + anthranilate. The protein operates within amino-acid biosynthesis; L-tryptophan biosynthesis; L-tryptophan from chorismate: step 2/5. Functionally, catalyzes the transfer of the phosphoribosyl group of 5-phosphorylribose-1-pyrophosphate (PRPP) to anthranilate to yield N-(5'-phosphoribosyl)-anthranilate (PRA). The chain is Anthranilate phosphoribosyltransferase from Xylella fastidiosa (strain 9a5c).